The sequence spans 463 residues: L-seryl-tRNA(Sec) selenium transferase (463 aa).

At Lys295 the chain carries N6-(pyridoxal phosphate)lysine.

This sequence belongs to the SelA family. In terms of assembly, homodecamer; pentamer of dimers. Binds only one seryl-tRNA(Sec) per dimer. Pyridoxal 5'-phosphate serves as cofactor.

The protein localises to the cytoplasm. It catalyses the reaction L-seryl-tRNA(Sec) + selenophosphate + H(+) = L-selenocysteinyl-tRNA(Sec) + phosphate. The protein operates within aminoacyl-tRNA biosynthesis; selenocysteinyl-tRNA(Sec) biosynthesis; selenocysteinyl-tRNA(Sec) from L-seryl-tRNA(Sec) (bacterial route): step 1/1. Its function is as follows. Converts seryl-tRNA(Sec) to selenocysteinyl-tRNA(Sec) required for selenoprotein biosynthesis. This chain is L-seryl-tRNA(Sec) selenium transferase, found in Escherichia coli O45:K1 (strain S88 / ExPEC).